Here is a 239-residue protein sequence, read N- to C-terminus: Cysteine-rich venom protein natrin-1 (239 aa).

An N-terminal signal peptide occupies residues 1-18 (MIAFSLLCFAAVLQQSFG). One can recognise an SCP domain in the interval 37 to 165 (VDLHNSLRRR…AWSYFYVCQY (129 aa)). 8 cysteine pairs are disulfide-bonded: Cys74-Cys152, Cys91-Cys166, Cys147-Cys163, Cys185-Cys192, Cys188-Cys197, Cys201-Cys234, Cys210-Cys228, and Cys219-Cys232. The ShKT domain occupies 201–234 (CTIYNKLTNCDSLLKQSSCQDDWIKSNCPASCFC).

Expressed by the venom gland.

It localises to the secreted. Its function is as follows. Inhibits calcium-activated potassium channels (KCa1.1/KCNMA1), voltage-gated potassium channel Kv1.3/KCNA3, and the calcium release channel/ryanodine receptor (RyR). Binds specifically to type 1 RyR (RyR1) from skeletal muscle. Inhibit both the binding of ryanodine to RyR1, and RyR1's calcium-channel activity. Inhibits carbachol-induced muscle contraction and weakly blocks muscle contraction evoked by potassium. In Naja atra (Chinese cobra), this protein is Cysteine-rich venom protein natrin-1.